Here is a 247-residue protein sequence, read N- to C-terminus: Thioredoxin reductase-like selenoprotein T homolog selt-1.1 (247 aa).

A signal peptide spans 1 to 26; that stretch reads MSRFGVFIIGVLFFMSVCDVLRTVSA. An intrachain disulfide couples Cys92 to Cys95.

This sequence belongs to the SelWTH family. SELT subfamily. In terms of tissue distribution, broadly expressed in neurons of nervous system including ADL, ASH, ASI, ASJ, ASK and AWB amphid sensilla neurons, in epithelial cells including hypodermal, arcade, pharyngeal, vulval and rectal cells, and in somatic muscle cells of the head, neck and body wall, and non-striated pharyngeal muscles.

It localises to the endoplasmic reticulum. The enzyme catalyses [thioredoxin]-dithiol + NADP(+) = [thioredoxin]-disulfide + NADPH + H(+). Functionally, probably has thioredoxin reductase-like oxidoreductase activity. Plays a role in regulating the oxidative stress response, and odorant and pathogenic bacteria avoidance behavior. The sequence is that of Thioredoxin reductase-like selenoprotein T homolog selt-1.1 from Caenorhabditis elegans.